The sequence spans 151 residues: MSSSSLSPTAGRTSGSDGDSAADTHRREKRRLSNRESARRSRLRKQQHLDELVQEVARLQADNARVAARARDIASQYTRVEQENTVLRARAAELGDRLRSVNEVLRLVEEFSGVAMDIQEEMPADDPLLRPWQLPYPAAAMPMGAPHMLHY.

Over residues 1–17 (MSSSSLSPTAGRTSGSD) the composition is skewed to polar residues. The segment at 1–47 (MSSSSLSPTAGRTSGSDGDSAADTHRREKRRLSNRESARRSRLRKQQ) is disordered. The segment covering 22-39 (ADTHRREKRRLSNRESAR) has biased composition (basic and acidic residues). The 64-residue stretch at 24-87 (THRREKRRLS…TRVEQENTVL (64 aa)) folds into the bZIP domain. The basic motif stretch occupies residues 26-45 (RREKRRLSNRESARRSRLRK). A leucine-zipper region spans residues 52 to 59 (LVQEVARL).

This sequence belongs to the bZIP family. Roots and shoots of young plants, and basal portion of leaves.

The protein localises to the nucleus. Its function is as follows. May contribute to developmentally specific patterns of gene expression. Binds specifically to ocs elements which are transcriptional enhancer found in the promoters of several plant genes. OCSBF-1 is able to bind to a site within each half of the ocs element as well as to animal AP-1 and CREB sites. This chain is Ocs element-binding factor 1 (OBF1), found in Zea mays (Maize).